The following is a 181-amino-acid chain: Der GTPase-activating protein YihI (181 aa).

Disordered stretches follow at residues Met1–Pro75 and Glu145–Gly181. The span at Arg32–Leu43 shows a compositional bias: basic residues. Residues Pro146–Glu155 are compositionally biased toward acidic residues. Basic and acidic residues predominate over residues Ala156–Asp165. The span at Asp166 to Gly181 shows a compositional bias: acidic residues.

This sequence belongs to the YihI family. In terms of assembly, interacts with Der.

Its function is as follows. A GTPase-activating protein (GAP) that modifies Der/EngA GTPase function. May play a role in ribosome biogenesis. In Vibrio vulnificus (strain YJ016), this protein is Der GTPase-activating protein YihI.